The following is a 429-amino-acid chain: Ribosomal RNA small subunit methyltransferase B (429 aa).

S-adenosyl-L-methionine contacts are provided by residues 254-260, Asp-277, Asp-303, and Asp-322; that span reads CAAPGGK. Cys-375 acts as the Nucleophile in catalysis.

It belongs to the class I-like SAM-binding methyltransferase superfamily. RsmB/NOP family.

The protein resides in the cytoplasm. The catalysed reaction is cytidine(967) in 16S rRNA + S-adenosyl-L-methionine = 5-methylcytidine(967) in 16S rRNA + S-adenosyl-L-homocysteine + H(+). In terms of biological role, specifically methylates the cytosine at position 967 (m5C967) of 16S rRNA. The protein is Ribosomal RNA small subunit methyltransferase B of Escherichia coli O6:H1 (strain CFT073 / ATCC 700928 / UPEC).